A 562-amino-acid polypeptide reads, in one-letter code: Arginine--tRNA ligase 1 (562 aa).

Positions 122-132 (PNIAKPFSMGH) match the 'HIGH' region motif.

This sequence belongs to the class-I aminoacyl-tRNA synthetase family. Monomer.

The protein localises to the cytoplasm. The enzyme catalyses tRNA(Arg) + L-arginine + ATP = L-arginyl-tRNA(Arg) + AMP + diphosphate. The chain is Arginine--tRNA ligase 1 from Bacillus thuringiensis subsp. konkukian (strain 97-27).